The primary structure comprises 257 residues: Probable septum site-determining protein MinC (257 aa).

The protein belongs to the MinC family. Interacts with MinD and FtsZ.

In terms of biological role, cell division inhibitor that blocks the formation of polar Z ring septums. Rapidly oscillates between the poles of the cell to destabilize FtsZ filaments that have formed before they mature into polar Z rings. Prevents FtsZ polymerization. The polypeptide is Probable septum site-determining protein MinC (Burkholderia lata (strain ATCC 17760 / DSM 23089 / LMG 22485 / NCIMB 9086 / R18194 / 383)).